The following is a 741-amino-acid chain: Eukaryotic peptide chain release factor GTP-binding subunit (741 aa).

Residues 5–135 (QQQQQQFNAN…SYNNNNNYNN (131 aa)) are several sort of repeats. Positions 59-161 (QQFGQYGQQQ…DQQQETGSGQ (103 aa)) are enriched in low complexity. Disordered regions lie at residues 59–186 (QQFG…KKVL) and 199–264 (IVTK…KTEA). Residues 162-311 (MSLEDYQKQQ…EQIDASIVND (150 aa)) are charged. Composition is skewed to basic and acidic residues over residues 166-175 (DYQKQQKESL) and 202-241 (KKKE…ESKV). A tr-type G domain is found at 316–541 (KDHMSIIFMG…YLDSMPLAVR (226 aa)). Positions 325–332 (GHVDAGKS) are G1. 325 to 332 (GHVDAGKS) is a GTP binding site. A G2 region spans residues 381 to 385 (GKTIE). T399 is subject to Phosphothreonine. The G3 stretch occupies residues 402-405 (DAPG). Residues 402-406 (DAPGH) and 464-467 (NKMD) contribute to the GTP site. The tract at residues 464–467 (NKMD) is G4. The interval 505–507 (SGY) is G5.

The protein belongs to the TRAFAC class translation factor GTPase superfamily. Classic translation factor GTPase family. ERF3 subfamily.

It is found in the cytoplasm. In terms of biological role, involved in translation termination. Stimulates the activity of ERF1. Binds guanine nucleotides. This Ogataea pini (Yeast) protein is Eukaryotic peptide chain release factor GTP-binding subunit (SUP2).